A 1339-amino-acid chain; its full sequence is Aldehyde oxidase 1 (1339 aa).

Positions Ser-5–Ile-92 constitute a 2Fe-2S ferredoxin-type domain. [2Fe-2S] cluster-binding residues include Cys-44, Cys-49, Cys-52, and Cys-74. Gln-113 is a binding site for Mo-molybdopterin. [2Fe-2S] cluster contacts are provided by Cys-114, Cys-117, Cys-149, and Cys-151. Cys-151 is a binding site for Mo-molybdopterin. In terms of domain architecture, FAD-binding PCMH-type spans Phe-236–Lys-421. Residues Val-264–Val-271, Ala-345, Ser-354, His-358, Asp-367, and Leu-411 contribute to the FAD site. Mo-molybdopterin-binding positions include Ala-807–Phe-808 and Met-1048. At Ser-1069 the chain carries Phosphoserine. Mo-molybdopterin is bound by residues Gly-1089 to Val-1092, Gln-1204, and Leu-1269. Residue Glu-1271 is the Proton acceptor; for azaheterocycle hydroxylase activity of the active site.

This sequence belongs to the xanthine dehydrogenase family. In terms of assembly, homodimer. [2Fe-2S] cluster serves as cofactor. Requires FAD as cofactor. The cofactor is Mo-molybdopterin. In terms of processing, the N-terminus is blocked. In terms of tissue distribution, expressed at high levels in liver, lung and spleen. Also expressed in kindey, eye, testis, duodenum, esophagus and thymus (at protein level).

It localises to the cytoplasm. It catalyses the reaction an aldehyde + O2 + H2O = a carboxylate + H2O2 + H(+). It carries out the reaction retinal + O2 + H2O = retinoate + H2O2 + H(+). In terms of biological role, oxidase with broad substrate specificity, oxidizing aromatic azaheterocycles, such as N1-methylnicotinamide, N-methylphthalazinium and phthalazine, as well as aldehydes, such as benzaldehyde, retinal, pyridoxal, and vanillin. Plays a key role in the metabolism of xenobiotics and drugs containing aromatic azaheterocyclic substituents. Is probably involved in the regulation of reactive oxygen species homeostasis. May be a prominent source of superoxide generation via the one-electron reduction of molecular oxygen. May also catalyze nitric oxide (NO) production via the reduction of nitrite to NO with NADH or aldehyde as electron donor. May play a role in adipogenesis. This Bos taurus (Bovine) protein is Aldehyde oxidase 1.